The sequence spans 292 residues: Ephrin type-A receptor 4a (292 aa).

Residues 1 to 9 (IGIGEFGEV) and K27 each bind ATP. Residues 1-265 (IGIGEFGEVC…QIVNMLDKLI (265 aa)) form the Protein kinase domain. D120 (proton acceptor) is an active-site residue. Phosphotyrosine; by autocatalysis is present on Y153.

The protein belongs to the protein kinase superfamily. Tyr protein kinase family. Ephrin receptor subfamily. Widely expressed in the developing nervous system.

The protein resides in the cell membrane. The protein localises to the early endosome. The catalysed reaction is L-tyrosyl-[protein] + ATP = O-phospho-L-tyrosyl-[protein] + ADP + H(+). Its function is as follows. Receptor tyrosine kinase which binds membrane-bound ephrin family ligands residing on adjacent cells, leading to contact-dependent bidirectional signaling into neighboring cells. The signaling pathway downstream of the receptor is referred to as forward signaling while the signaling pathway downstream of the ephrin ligand is referred to as reverse signaling. Highly promiscuous, it has the unique property among Eph receptors to bind and to be physiologically activated by both GPI-anchored ephrin-A and transmembrane ephrin-B ligands including efna1 and efnb3. Upon activation by ephrin ligands, modulates cell morphology and integrin-dependent cell adhesion through regulation of the Rac, Rap and Rho GTPases activity. Plays an important role in the development of the nervous system controlling different steps of axonal guidance including the establishment of the corticospinal projections. This chain is Ephrin type-A receptor 4a (epha4a), found in Danio rerio (Zebrafish).